Here is a 429-residue protein sequence, read N- to C-terminus: Transcriptional adapter 3 (429 aa).

Residues 41–70 (IEELDTLQLELETLLSSASRRLRALEEQRQ) adopt a coiled-coil conformation. 3 disordered regions span residues 86-132 (KLEK…TKVQ), 208-257 (EERR…PFGP), and 274-308 (PMED…HTRS). Basic and acidic residues-rich tracts occupy residues 208 to 221 (EERR…DKKK) and 230 to 249 (LDAK…HEPP). Positions 364–404 (LLKLAREEMRKQELRQRVRVADNEVMEAFRRIMAARQKKRT) form a coiled coil.

The protein belongs to the NGG1 family.

Its subcellular location is the nucleus. Functions as a component of the PCAF complex. The PCAF complex is capable of efficiently acetylating histones in a nucleosomal context. This is Transcriptional adapter 3 (tada3) from Danio rerio (Zebrafish).